Consider the following 201-residue polypeptide: Proteasome subunit beta type-2 (201 aa).

Met-1 is modified (N-acetylmethionine).

It belongs to the peptidase T1B family. As to quaternary structure, the 26S proteasome consists of a 20S proteasome core and two 19S regulatory subunits. The 20S proteasome core is a barrel-shaped complex made of 28 subunits that are arranged in four stacked rings. The two outer rings are each formed by seven alpha subunits, and the two inner rings are formed by seven beta subunits. The proteolytic activity is exerted by three beta-subunits PSMB5, PSMB6 and PSMB7.

Its subcellular location is the cytoplasm. The protein resides in the nucleus. Functionally, non-catalytic component of the 20S core proteasome complex involved in the proteolytic degradation of most intracellular proteins. This complex plays numerous essential roles within the cell by associating with different regulatory particles. Associated with two 19S regulatory particles, forms the 26S proteasome and thus participates in the ATP-dependent degradation of ubiquitinated proteins. The 26S proteasome plays a key role in the maintenance of protein homeostasis by removing misfolded or damaged proteins that could impair cellular functions, and by removing proteins whose functions are no longer required. Associated with the PA200 or PA28, the 20S proteasome mediates ubiquitin-independent protein degradation. This type of proteolysis is required in several pathways including spermatogenesis (20S-PA200 complex) or generation of a subset of MHC class I-presented antigenic peptides (20S-PA28 complex). The polypeptide is Proteasome subunit beta type-2 (PSMB2) (Bos taurus (Bovine)).